We begin with the raw amino-acid sequence, 318 residues long: Ribosomal RNA small subunit methyltransferase H (318 aa).

Residues 37 to 39 (GGH), D57, F83, D104, and Q111 each bind S-adenosyl-L-methionine.

It belongs to the methyltransferase superfamily. RsmH family.

It localises to the cytoplasm. It catalyses the reaction cytidine(1402) in 16S rRNA + S-adenosyl-L-methionine = N(4)-methylcytidine(1402) in 16S rRNA + S-adenosyl-L-homocysteine + H(+). Specifically methylates the N4 position of cytidine in position 1402 (C1402) of 16S rRNA. This is Ribosomal RNA small subunit methyltransferase H from Neisseria gonorrhoeae (strain ATCC 700825 / FA 1090).